The following is a 633-amino-acid chain: Cyclic GMP-AMP synthase-like receptor 1 (633 aa).

3 disordered regions span residues 23 to 80, 107 to 214, and 250 to 276; these read KVHG…HPHT, FKGP…TDPF, and REDD…RPSS. The segment covering 29–67 has biased composition (basic and acidic residues); sequence KQHESAHPPRERHTERTATKRSDETKTASRPTASHEGKT. A compositionally biased stretch (polar residues) spans 68–80; the sequence is HTTNPRGQVHPHT. 3 stretches are compositionally biased toward basic and acidic residues: residues 125 to 143, 176 to 194, and 250 to 274; these read RKPE…DHRT, RKPD…DHRT, and REDD…DDRP. E353, D355, and D455 together coordinate Mg(2+).

This sequence belongs to the mab-21 family. Requires Mg(2+) as cofactor. The cofactor is Mn(2+).

The enzyme catalyses UTP + ATP = 2',3'-cUAMP + 2 diphosphate. In terms of biological role, nucleotidyltransferase that catalyzes the formation of cyclic UMP-AMP (2',3'-cUAMP) from ATP and UTP and plays a key role in innate immunity. Acts as a key sensor of double-stranded DNA (dsDNA), the presence of dsDNA in the cytoplasm being a danger signal that triggers the immune responses. Directly binds dsDNA, activating the nucleotidyltransferase activity, leading to synthesis of 2',3'-cUAMP, a second messenger that binds to and activates Sting, thereby triggering the immune response via activation of the NF-kappa-B transcription factor. The chain is Cyclic GMP-AMP synthase-like receptor 1 from Crassostrea virginica (Eastern oyster).